The chain runs to 101 residues: MATNHLVLSGTITRSRSFHSPSGIAHSVIMLEHKSQCYEAEMLRNVYCQMQVILSGERFESVTDKLKIGVDIEVQGFIALQQSRNGQNRLVLHAENVELKT.

The region spanning 1 to 101 is the SSB domain; the sequence is MATNHLVLSG…LHAENVELKT (101 aa).

It belongs to the PriB family. As to quaternary structure, homodimer. Interacts with PriA and DnaT. Component of the replication restart primosome. Primosome assembly occurs via a 'hand-off' mechanism. PriA binds to replication forks, subsequently PriB then DnaT bind; DnaT then displaces ssDNA to generate the helicase loading substrate.

In terms of biological role, involved in the restart of stalled replication forks, which reloads the replicative helicase on sites other than the origin of replication; the PriA-PriB pathway is the major replication restart pathway. During primosome assembly it facilitates complex formation between PriA and DnaT on DNA; stabilizes PriA on DNA. Stimulates the DNA unwinding activity of PriA helicase. The polypeptide is Replication restart protein PriB (Shewanella woodyi (strain ATCC 51908 / MS32)).